The following is a 544-amino-acid chain: Pyruvate kinase (544 aa).

Residue Arg31 coordinates substrate. Asn33 and Asp61 together coordinate K(+). 33 to 36 (NSAH) contributes to the ATP binding site. Arg68 lines the ATP pocket. Glu204 is a binding site for Mg(2+). The substrate site is built by Gly227, Asp228, and Thr260. A Mg(2+)-binding site is contributed by Asp228.

This sequence belongs to the pyruvate kinase family. Homotetramer. It depends on Mg(2+) as a cofactor. The cofactor is K(+).

The enzyme catalyses pyruvate + ATP = phosphoenolpyruvate + ADP + H(+). Its pathway is carbohydrate degradation; glycolysis; pyruvate from D-glyceraldehyde 3-phosphate: step 5/5. The protein is Pyruvate kinase of Thermoplasma acidophilum (strain ATCC 25905 / DSM 1728 / JCM 9062 / NBRC 15155 / AMRC-C165).